We begin with the raw amino-acid sequence, 137 residues long: Acidic phospholipase A2 CC-PLA2-1 (137 aa).

An N-terminal signal peptide occupies residues 1–16; it reads MRTLWIVAVWLMGVEG. 7 disulfides stabilise this stretch: cysteine 42–cysteine 130, cysteine 44–cysteine 60, cysteine 59–cysteine 110, cysteine 65–cysteine 137, cysteine 66–cysteine 103, cysteine 73–cysteine 96, and cysteine 90–cysteine 101. The Ca(2+) site is built by tyrosine 43, glycine 45, and glycine 47. Residue histidine 63 is part of the active site. Aspartate 64 contributes to the Ca(2+) binding site. Aspartate 104 is a catalytic residue.

It belongs to the phospholipase A2 family. Group II subfamily. D49 sub-subfamily. Requires Ca(2+) as cofactor. Glycosylated (2.5%). Expressed by the venom gland.

The protein localises to the secreted. The enzyme catalyses a 1,2-diacyl-sn-glycero-3-phosphocholine + H2O = a 1-acyl-sn-glycero-3-phosphocholine + a fatty acid + H(+). Its function is as follows. Snake venom phospholipase A2 (PLA2) that inhibits blood coagulation and platelet aggregation induced by ADP and arachidonic acid. Inhibits tumor cell adhesion and migration in a dose-dependent manner. Abolishes the attachment of human brain microvascular endothelial cells (HBMEC) to fibrinogen (IC(50)=0.12 uM) and dramatically reduces its adhesion to fibronectin (IC(50)=0.12 uM), whereas no effect is observed on type I collagen, vitronectin or laminin 1. Also blocks the cell migration toward fibronectin and fibrinogen. These effects are not dependent of the catalytic activity, but are mediated by alpha-5/beta-1 (ITGA5/ITGB1) and alpha-v-containing (ITGAV) integrins. Also shows anti-angiogenic activity in chicken chorioallantoix membrane assay. Has a relatively high enzymatic activity. PLA2 catalyzes the calcium-dependent hydrolysis of the 2-acyl groups in 3-sn-phosphoglycerides. The polypeptide is Acidic phospholipase A2 CC-PLA2-1 (Cerastes cerastes (Horned desert viper)).